Reading from the N-terminus, the 93-residue chain is Putative ribosomal protein eL43-like (93 aa).

The segment at C40–C61 adopts a C4-type zinc-finger fold.

Belongs to the eukaryotic ribosomal protein eL43 family.

In Homo sapiens (Human), this protein is Putative ribosomal protein eL43-like (RPL37AP8).